Here is a 780-residue protein sequence, read N- to C-terminus: GATOR2 complex protein WDR24 (780 aa).

6 WD repeats span residues 67–107 (SLNF…RNKQ), 113–153 (EHKR…SVST), 156–196 (GQSE…RCER), 200–240 (AHNG…AKEI), 244–286 (QTIA…IPFA), and 290–333 (EHKD…IDRA). The segment at 708-730 (NCSNCKRPMSNKGWICDRCRQCA) adopts a C4-type zinc-finger fold. Zn(2+)-binding residues include cysteine 709, cysteine 712, cysteine 723, cysteine 726, cysteine 733, cysteine 736, cysteine 747, cysteine 750, histidine 752, histidine 755, histidine 758, cysteine 769, cysteine 773, histidine 775, and cysteine 777. An RING-type; atypical zinc finger spans residues 731–780 (SMCAVCHHVVKGLFVWCQGCCHGGHLQHIMNWMQNNCYCPAGCGHVCEYS).

It belongs to the WD repeat WDR24 family. Component of the GATOR2 subcomplex, composed of MIOS, SEC13, SEH1L, WDR24 and WDR59. The GATOR2 complex interacts with CASTOR1 and CASTOR2; the interaction is negatively regulated by arginine. The GATOR2 complex interacts with SESN1, SESN2 and SESN3; the interaction is negatively regulated by amino acids.

It is found in the lysosome membrane. It catalyses the reaction S-ubiquitinyl-[E2 ubiquitin-conjugating enzyme]-L-cysteine + [acceptor protein]-L-lysine = [E2 ubiquitin-conjugating enzyme]-L-cysteine + N(6)-ubiquitinyl-[acceptor protein]-L-lysine.. The protein operates within protein modification; protein ubiquitination. With respect to regulation, the GATOR2 complex is negatively regulated by the upstream amino acid sensors CASTOR1 and SESN2, which sequester the GATOR2 complex in absence of amino acids. In the presence of abundant amino acids, GATOR2 is released from CASTOR1 and SESN2 and activated. In terms of biological role, catalytic component of the GATOR2 complex, a multiprotein complex that acts as an activator of the amino acid-sensing branch of the mTORC1 signaling pathway. The GATOR2 complex indirectly activates mTORC1 through the inhibition of the GATOR1 subcomplex. GATOR2 probably acts as an E3 ubiquitin-protein ligase toward GATOR1. In the presence of abundant amino acids, the GATOR2 complex mediates ubiquitination of the NPRL2 core component of the GATOR1 complex, leading to GATOR1 inactivation. In the absence of amino acids, GATOR2 is inhibited, activating the GATOR1 complex. In addition to its role in regulation of the mTORC1 complex, promotes the acidification of lysosomes and facilitates autophagic flux. Within the GATOR2 complex, WDR24 constitutes the catalytic subunit that mediates 'Lys-6'-linked ubiquitination of NPRL2. This Xenopus laevis (African clawed frog) protein is GATOR2 complex protein WDR24.